Here is a 228-residue protein sequence, read N- to C-terminus: 7-cyano-7-deazaguanine synthase (228 aa).

10–20 (FSGGQDSTTLA) lines the ATP pocket. Positions 190, 205, 208, and 211 each coordinate Zn(2+).

The protein belongs to the QueC family. Zn(2+) is required as a cofactor.

The catalysed reaction is 7-carboxy-7-deazaguanine + NH4(+) + ATP = 7-cyano-7-deazaguanine + ADP + phosphate + H2O + H(+). It participates in purine metabolism; 7-cyano-7-deazaguanine biosynthesis. In terms of biological role, catalyzes the ATP-dependent conversion of 7-carboxy-7-deazaguanine (CDG) to 7-cyano-7-deazaguanine (preQ(0)). The polypeptide is 7-cyano-7-deazaguanine synthase (Helicobacter pylori (strain HPAG1)).